Consider the following 271-residue polypeptide: Phosphatidylglycerol--prolipoprotein diacylglyceryl transferase (271 aa).

7 consecutive transmembrane segments (helical) span residues isoleucine 21–alanine 41, leucine 60–tyrosine 80, valine 95–tryptophan 115, phenylalanine 124–leucine 144, serine 176–isoleucine 196, glycine 203–valine 223, and leucine 230–glycine 250. Arginine 143 serves as a coordination point for a 1,2-diacyl-sn-glycero-3-phospho-(1'-sn-glycerol).

The protein belongs to the Lgt family.

The protein resides in the cell inner membrane. The catalysed reaction is L-cysteinyl-[prolipoprotein] + a 1,2-diacyl-sn-glycero-3-phospho-(1'-sn-glycerol) = an S-1,2-diacyl-sn-glyceryl-L-cysteinyl-[prolipoprotein] + sn-glycerol 1-phosphate + H(+). The protein operates within protein modification; lipoprotein biosynthesis (diacylglyceryl transfer). Catalyzes the transfer of the diacylglyceryl group from phosphatidylglycerol to the sulfhydryl group of the N-terminal cysteine of a prolipoprotein, the first step in the formation of mature lipoproteins. In Vibrio vulnificus (strain YJ016), this protein is Phosphatidylglycerol--prolipoprotein diacylglyceryl transferase.